The sequence spans 232 residues: A-type ATP synthase subunit D (232 aa).

The interval Lys200 to Asp232 is disordered. The span at Glu209–Asp222 shows a compositional bias: acidic residues.

Belongs to the V-ATPase D subunit family. Has multiple subunits with at least A(3), B(3), C, D, E, F, H, I and proteolipid K(x).

The protein localises to the cell membrane. Component of the A-type ATP synthase that produces ATP from ADP in the presence of a proton gradient across the membrane. The protein is A-type ATP synthase subunit D of Haloquadratum walsbyi (strain DSM 16790 / HBSQ001).